The chain runs to 283 residues: Acetylglutamate kinase (283 aa).

Residues 64–65 (GG), R86, and N181 each bind substrate.

The protein belongs to the acetylglutamate kinase family. ArgB subfamily.

The protein localises to the cytoplasm. The catalysed reaction is N-acetyl-L-glutamate + ATP = N-acetyl-L-glutamyl 5-phosphate + ADP. It functions in the pathway amino-acid biosynthesis; L-arginine biosynthesis; N(2)-acetyl-L-ornithine from L-glutamate: step 2/4. Functionally, catalyzes the ATP-dependent phosphorylation of N-acetyl-L-glutamate. In Sulfurimonas denitrificans (strain ATCC 33889 / DSM 1251) (Thiomicrospira denitrificans (strain ATCC 33889 / DSM 1251)), this protein is Acetylglutamate kinase.